The chain runs to 774 residues: 5-methyltetrahydropteroyltriglutamate--homocysteine methyltransferase (774 aa).

5-methyltetrahydropteroyltri-L-glutamate contacts are provided by residues 23 to 26 (RELK) and Lys-123. Residues 446–448 (IGS) and Glu-499 each bind L-homocysteine. L-methionine contacts are provided by residues 446-448 (IGS) and Glu-499. Residues 530–531 (RC) and Trp-576 contribute to the 5-methyltetrahydropteroyltri-L-glutamate site. Residue Asp-614 coordinates L-homocysteine. Asp-614 is a binding site for L-methionine. Glu-620 contacts 5-methyltetrahydropteroyltri-L-glutamate. 3 residues coordinate Zn(2+): His-656, Cys-658, and Glu-680. His-709 serves as the catalytic Proton donor. Cys-741 lines the Zn(2+) pocket.

It belongs to the vitamin-B12 independent methionine synthase family. Requires Zn(2+) as cofactor.

The catalysed reaction is 5-methyltetrahydropteroyltri-L-glutamate + L-homocysteine = tetrahydropteroyltri-L-glutamate + L-methionine. Its pathway is amino-acid biosynthesis; L-methionine biosynthesis via de novo pathway; L-methionine from L-homocysteine (MetE route): step 1/1. Its function is as follows. Catalyzes the transfer of a methyl group from 5-methyltetrahydrofolate to homocysteine resulting in methionine formation. The polypeptide is 5-methyltetrahydropteroyltriglutamate--homocysteine methyltransferase (Aliivibrio fischeri (strain ATCC 700601 / ES114) (Vibrio fischeri)).